The primary structure comprises 380 residues: Genome polyprotein (380 aa).

2 disordered regions span residues 54 to 154 (GTVD…TGKI) and 349 to 380 (GNVG…QQHH). Low complexity predominate over residues 67-84 (QGTTPPATGSGAKPATSG). Composition is skewed to gly residues over residues 85–99 (AGSG…GVTG) and 106–123 (SGTG…GSGS). Positions 129–140 (NTGSAGTNATGG) are enriched in low complexity.

Belongs to the potyviridae genome polyprotein family. Post-translationally, genome polyprotein of potyviruses undergoes post-translational proteolytic processing by the main proteinase NIa-pro resulting in the production of at least ten individual proteins. The P1 proteinase and the HC-pro cleave only their respective C-termini autocatalytically. 6K1 is essential for proper proteolytic separation of P3 from CI.

Its subcellular location is the virion. It carries out the reaction RNA(n) + a ribonucleoside 5'-triphosphate = RNA(n+1) + diphosphate. In terms of biological role, an RNA-dependent RNA polymerase that plays an essential role in the virus replication. Its function is as follows. Involved in aphid transmission, cell-to-cell and systemis movement, encapsidation of the viral RNA and in the regulation of viral RNA amplification. The sequence is that of Genome polyprotein from Sorghum halepense (Johnson grass).